The chain runs to 658 residues: MSVTTTETTGTAPALPRKTLGLAMIGLAVMMTLLHYAGLLPAWLHRLPEAIIPPFATWLDAIFNFVKDDLGLLALTRLLTDGLEVVLDATANLLFGKRRWPNIGPIPWSAIAAMTAVVGYYLGGWRMALLAGGTFVWTAMIGQWDIAMQTMSVLVVAAPLAFAIGLVLGISAWKSPSFDAVLRPVLAVLQTLPFFTYLLPAVIFFKVGPTAGAVATTVYAIPPMILMTTLGLQKVSPEVVEAGKMSGCTRWQMLRHVYIPAARTEILVGVNQVIMLCLAMVVLTAFIGMPGLGAKLLAMMGSFKIGRSFEIGVTIVLLAVTLDRMSKAWVVKLPEHFERGTPFWIRHKFLLMAIGAFVGFTLIAQVVPILSEVGRKQSWSQGKEIDTLIKGFLAIDAVQAITNSIRYVLNIWVLNPLRDFMLSIPTVAFVLFISAAALLVAGRREAVLAAAFFGLVALTGWWDRSVITLYSVLAAVSIALLLGVPIGVVAARKEKTANAVLLACDTAQTFPSFIYLIPAIMLFGITATSVVMSILIFSMVPLVRYTIEGLRNVPDEMTEAADMAGATRMQKLWNVQLPLALPTMAVGFNQAIMFAFFMVIIAAFIGTQDLGQELQRTLAGTDLGKNFVLGICVTLMALTFDMVIMKWADDKKARLGLN.

Transmembrane regions (helical) follow at residues 20 to 40, 103 to 123, 127 to 147, 153 to 173, 185 to 205, 212 to 232, 273 to 293, 300 to 320, 349 to 369, 420 to 440, 447 to 467, 469 to 489, 517 to 537, 585 to 605, and 627 to 647; these read LGLA…AGLL, IGPI…YYLG, MALL…WDIA, VLVV…ISAW, VLAV…VIFF, GAVA…TLGL, VIML…PGLG, MGSF…LLAV, FLLM…VVPI, FMLS…ALLV, VLAA…RSVI, LYSV…IGVV, IPAI…ILIF, AVGF…AAFI, and FVLG…IMKW. One can recognise an ABC transmembrane type-1 1 domain in the interval 147 to 326; that stretch reads AMQTMSVLVV…LLAVTLDRMS (180 aa). Residues 465 to 644 enclose the ABC transmembrane type-1 2 domain; the sequence is SVITLYSVLA…LMALTFDMVI (180 aa).

The protein belongs to the binding-protein-dependent transport system permease family. As to quaternary structure, the complex is probably composed of two ATP-binding proteins (TmoW), two transmembrane proteins (TmoV) and a solute-binding protein (TmoX).

The protein resides in the cell inner membrane. In terms of biological role, part of the ABC transporter complex TmoXWV involved in trimethylamine N-oxide (TMAO) import. Responsible for the translocation of the substrate across the membrane. Is specific for TMAO and essential for TMAO metabolism. The polypeptide is Trimethylamine N-oxide transport system permease protein TmoV (Ruegeria pomeroyi (strain ATCC 700808 / DSM 15171 / DSS-3) (Silicibacter pomeroyi)).